Here is a 132-residue protein sequence, read N- to C-terminus: Small ribosomal subunit protein uS8 (132 aa).

The protein belongs to the universal ribosomal protein uS8 family. Part of the 30S ribosomal subunit. Contacts proteins S5 and S12.

Its function is as follows. One of the primary rRNA binding proteins, it binds directly to 16S rRNA central domain where it helps coordinate assembly of the platform of the 30S subunit. The protein is Small ribosomal subunit protein uS8 of Brucella ovis (strain ATCC 25840 / 63/290 / NCTC 10512).